The chain runs to 173 residues: Crossover junction endodeoxyribonuclease RuvC (173 aa).

Active-site residues include D8, E67, and D139. Residues D8, E67, and D139 each coordinate Mg(2+).

The protein belongs to the RuvC family. As to quaternary structure, homodimer which binds Holliday junction (HJ) DNA. The HJ becomes 2-fold symmetrical on binding to RuvC with unstacked arms; it has a different conformation from HJ DNA in complex with RuvA. In the full resolvosome a probable DNA-RuvA(4)-RuvB(12)-RuvC(2) complex forms which resolves the HJ. It depends on Mg(2+) as a cofactor.

It localises to the cytoplasm. The catalysed reaction is Endonucleolytic cleavage at a junction such as a reciprocal single-stranded crossover between two homologous DNA duplexes (Holliday junction).. Functionally, the RuvA-RuvB-RuvC complex processes Holliday junction (HJ) DNA during genetic recombination and DNA repair. Endonuclease that resolves HJ intermediates. Cleaves cruciform DNA by making single-stranded nicks across the HJ at symmetrical positions within the homologous arms, yielding a 5'-phosphate and a 3'-hydroxyl group; requires a central core of homology in the junction. The consensus cleavage sequence is 5'-(A/T)TT(C/G)-3'. Cleavage occurs on the 3'-side of the TT dinucleotide at the point of strand exchange. HJ branch migration catalyzed by RuvA-RuvB allows RuvC to scan DNA until it finds its consensus sequence, where it cleaves and resolves the cruciform DNA. The polypeptide is Crossover junction endodeoxyribonuclease RuvC (Proteus mirabilis (strain HI4320)).